A 132-amino-acid polypeptide reads, in one-letter code: Galectin-2 (132 aa).

The Galectin domain maps to 4 to 131 (ELEVKNMDMK…GFNMSSFKLK (128 aa)). 65–71 (WGQEQRE) provides a ligand contact to a beta-D-galactoside.

As to quaternary structure, homodimer.

This protein binds beta-galactoside. Its physiological function is not yet known. In Homo sapiens (Human), this protein is Galectin-2 (LGALS2).